A 968-amino-acid polypeptide reads, in one-letter code: RNA polymerase-associated protein RapA (968 aa).

The 171-residue stretch at 164–334 (DVGRRHAPRV…FARLRLLDPN (171 aa)) folds into the Helicase ATP-binding domain. 177–184 (DEVGLGKT) serves as a coordination point for ATP. Residues 280 to 283 (DEAH) carry the DEAH box motif. Positions 490–662 (RVEWLMGYLT…YLASPDETEG (173 aa)) constitute a Helicase C-terminal domain.

The protein belongs to the SNF2/RAD54 helicase family. RapA subfamily. In terms of assembly, interacts with the RNAP. Has a higher affinity for the core RNAP than for the holoenzyme. Its ATPase activity is stimulated by binding to RNAP.

Its function is as follows. Transcription regulator that activates transcription by stimulating RNA polymerase (RNAP) recycling in case of stress conditions such as supercoiled DNA or high salt concentrations. Probably acts by releasing the RNAP, when it is trapped or immobilized on tightly supercoiled DNA. Does not activate transcription on linear DNA. Probably not involved in DNA repair. This is RNA polymerase-associated protein RapA from Escherichia coli O81 (strain ED1a).